The chain runs to 153 residues: Methylglyoxal synthase (153 aa).

Residues 3 to 153 form the MGS-like domain; the sequence is DQVNRPKGVT…SYLSRDVPGN (151 aa). Residues histidine 19, lysine 23, 45–48, and 65–66 contribute to the substrate site; these read TGTT and SG. The active-site Proton donor/acceptor is the aspartate 71. Histidine 98 contributes to the substrate binding site.

Belongs to the methylglyoxal synthase family.

It catalyses the reaction dihydroxyacetone phosphate = methylglyoxal + phosphate. Its function is as follows. Catalyzes the formation of methylglyoxal from dihydroxyacetone phosphate. This is Methylglyoxal synthase from Hahella chejuensis (strain KCTC 2396).